The following is a 438-amino-acid chain: UPF0229 protein NGR_c12350 (438 aa).

Residues 1 to 16 show a composition bias toward basic and acidic residues; the sequence is MPNFIDRRLNPKDKSL. Disordered regions lie at residues 1-20 and 83-107; these read MPNF…GNRQ and FAAG…GTGQ. Residues 94 to 105 show a composition bias toward gly residues; sequence SGGGATGAGAGT.

It belongs to the UPF0229 family.

This chain is UPF0229 protein NGR_c12350, found in Sinorhizobium fredii (strain NBRC 101917 / NGR234).